The primary structure comprises 1073 residues: Guanylyl cyclase C (1073 aa).

A signal peptide spans 1-23; that stretch reads MKTLLLDLALWSLLFQPGWLSFS. The Extracellular portion of the chain corresponds to 24-430; sequence SQVSQNCHNG…PNDITGRGPQ (407 aa). N-linked (GlcNAc...) asparagine glycosylation is found at Asn32, Asn75, Asn79, Asn195, Asn284, Asn307, Asn345, and Asn402. A helical membrane pass occupies residues 431–454; that stretch reads ILMIAVFTLTGAVVLLLLVALLML. Over 455–1073 the chain is Cytoplasmic; it reads RKYRKDYELR…NTTDKESTYF (619 aa). Positions 489–749 constitute a Protein kinase domain; it reads LKIDDDKRRD…KIETTLAKIF (261 aa). Positions 824 to 954 constitute a Guanylate cyclase domain; sequence TIYFSDIVGF…DTVNTASRME (131 aa).

The protein belongs to the adenylyl cyclase class-4/guanylyl cyclase family. In terms of assembly, homotrimer. Interacts via its C-terminal region with NHERF4. Interacts with the lectin chaperone VIP36. In terms of processing, glycosylation at Asn-75 and/or Asn-79 is required for interaction with VIP36 while glycosylation at Asn-345 and Asn-402 modulates ligand-mediated GUCY2C activation.

The protein resides in the cell membrane. It is found in the endoplasmic reticulum membrane. It carries out the reaction GTP = 3',5'-cyclic GMP + diphosphate. Its function is as follows. Guanylyl cyclase that catalyzes synthesis of cyclic GMP (cGMP) from GTP. Receptor for the E.coli heat-stable enterotoxin; E.coli enterotoxin markedly stimulates the accumulation of cGMP in mammalian cells expressing GUCY2C. Also activated by the endogenous peptides guanylin and uroguanylin. This Homo sapiens (Human) protein is Guanylyl cyclase C.